The sequence spans 117 residues: Large ribosomal subunit protein bL20c (117 aa).

Belongs to the bacterial ribosomal protein bL20 family.

It localises to the plastid. Its subcellular location is the chloroplast. Functionally, binds directly to 23S ribosomal RNA and is necessary for the in vitro assembly process of the 50S ribosomal subunit. It is not involved in the protein synthesizing functions of that subunit. This Lemna minor (Common duckweed) protein is Large ribosomal subunit protein bL20c.